The primary structure comprises 252 residues: Probable 6-phosphogluconolactonase 5 (252 aa).

It belongs to the glucosamine/galactosamine-6-phosphate isomerase family. 6-phosphogluconolactonase subfamily.

It is found in the cytoplasm. The protein localises to the cytosol. It catalyses the reaction 6-phospho-D-glucono-1,5-lactone + H2O = 6-phospho-D-gluconate + H(+). The protein operates within carbohydrate degradation; pentose phosphate pathway; D-ribulose 5-phosphate from D-glucose 6-phosphate (oxidative stage): step 2/3. Functionally, catalyzes the hydrolysis of 6-phosphogluconolactone to 6-phosphogluconate. The chain is Probable 6-phosphogluconolactonase 5 from Arabidopsis thaliana (Mouse-ear cress).